Reading from the N-terminus, the 254-residue chain is Rho-related protein racD (254 aa).

15–22 lines the GTP pocket; it reads GDGAVGKT. The short motif at 37–45 is the Effector region element; the sequence is YVPTVFDNF. GTP is bound by residues 62 to 66 and 120 to 123; these read DTAGQ and TKTD. A compositionally biased stretch (low complexity) spans 186-231; sequence AVTSPTSKSSGKSSPSSTSSKPSKTTTTTTTSSSSSSPPAASTAKP. A disordered region spans residues 186-254; it reads AVTSPTSKSS…KDKDEKKPAK (69 aa). Positions 232 to 254 are enriched in basic and acidic residues; that stretch reads AGEKKLSWGLFRKKDKDEKKPAK.

This sequence belongs to the small GTPase superfamily. Rho family.

The chain is Rho-related protein racD (racD) from Dictyostelium discoideum (Social amoeba).